Reading from the N-terminus, the 341-residue chain is L-threonine 3-dehydrogenase (341 aa).

Cysteine 38 contacts Zn(2+). Catalysis depends on charge relay system residues threonine 40 and histidine 43. Zn(2+) contacts are provided by histidine 63, glutamate 64, cysteine 93, cysteine 96, cysteine 99, and cysteine 107. NAD(+) contacts are provided by residues isoleucine 175, aspartate 195, arginine 200, 262–264, and 286–287; these read LGI and IY.

It belongs to the zinc-containing alcohol dehydrogenase family. As to quaternary structure, homotetramer. The cofactor is Zn(2+).

It localises to the cytoplasm. The enzyme catalyses L-threonine + NAD(+) = (2S)-2-amino-3-oxobutanoate + NADH + H(+). The protein operates within amino-acid degradation; L-threonine degradation via oxydo-reductase pathway; glycine from L-threonine: step 1/2. In terms of biological role, catalyzes the NAD(+)-dependent oxidation of L-threonine to 2-amino-3-ketobutyrate. This chain is L-threonine 3-dehydrogenase, found in Salmonella choleraesuis (strain SC-B67).